The primary structure comprises 119 residues: Integration host factor subunit alpha (119 aa).

The tract at residues 96–119 (INGQQGSGKMNGEASHEQLSAEPE) is disordered.

Belongs to the bacterial histone-like protein family. Heterodimer of an alpha and a beta chain.

Its function is as follows. This protein is one of the two subunits of integration host factor, a specific DNA-binding protein that functions in genetic recombination as well as in transcriptional and translational control. The chain is Integration host factor subunit alpha from Bradyrhizobium sp. (strain BTAi1 / ATCC BAA-1182).